Here is a 261-residue protein sequence, read N- to C-terminus: Cytochrome c oxidase subunit 3 (261 aa).

Topologically, residues 1–15 (MTHQTHAYHMVNPSP) are mitochondrial matrix. Residues 16 to 34 (WPLTGALSALLLTSGLIMW) traverse the membrane as a helical segment. Residues 35–40 (FHFNSF) lie on the Mitochondrial intermembrane side of the membrane. A helical membrane pass occupies residues 41–66 (LLVIIGLTCMLLTMYQWWRDIVREGT). Residues 67–72 (FQGHHT) lie on the Mitochondrial matrix side of the membrane. A helical membrane pass occupies residues 73–105 (PVVQKGLRYGMVLFIVSEVFFFLGFFWAFYHSS). At 106–128 (LAPTPELGGCWPPTGIHPLNPLE) the chain is on the mitochondrial intermembrane side. Residues 129 to 152 (VPLLNTSILLASGVSITWAHHSLM) form a helical membrane-spanning segment. Over 153 to 155 (EGN) the chain is Mitochondrial matrix. The chain crosses the membrane as a helical span at residues 156–183 (RKQMIQALSITILLGIYFTILQASEYYE). The Mitochondrial intermembrane portion of the chain corresponds to 184–190 (SSFTISD). The helical transmembrane segment at 191–223 (GVYGSTFFVATGFHGLHVIIGTTFLIVCLLRQF) threads the bilayer. Topologically, residues 224–232 (NFHFTSTHH) are mitochondrial matrix. Residues 233–256 (FGFEAAAWYWHFVDVVWLFLYVSI) traverse the membrane as a helical segment. Over 257 to 261 (YWWGS) the chain is Mitochondrial intermembrane.

The protein belongs to the cytochrome c oxidase subunit 3 family. Component of the cytochrome c oxidase (complex IV, CIV), a multisubunit enzyme composed of 14 subunits. The complex is composed of a catalytic core of 3 subunits MT-CO1, MT-CO2 and MT-CO3, encoded in the mitochondrial DNA, and 11 supernumerary subunits COX4I, COX5A, COX5B, COX6A, COX6B, COX6C, COX7A, COX7B, COX7C, COX8 and NDUFA4, which are encoded in the nuclear genome. The complex exists as a monomer or a dimer and forms supercomplexes (SCs) in the inner mitochondrial membrane with NADH-ubiquinone oxidoreductase (complex I, CI) and ubiquinol-cytochrome c oxidoreductase (cytochrome b-c1 complex, complex III, CIII), resulting in different assemblies (supercomplex SCI(1)III(2)IV(1) and megacomplex MCI(2)III(2)IV(2)).

Its subcellular location is the mitochondrion inner membrane. It carries out the reaction 4 Fe(II)-[cytochrome c] + O2 + 8 H(+)(in) = 4 Fe(III)-[cytochrome c] + 2 H2O + 4 H(+)(out). In terms of biological role, component of the cytochrome c oxidase, the last enzyme in the mitochondrial electron transport chain which drives oxidative phosphorylation. The respiratory chain contains 3 multisubunit complexes succinate dehydrogenase (complex II, CII), ubiquinol-cytochrome c oxidoreductase (cytochrome b-c1 complex, complex III, CIII) and cytochrome c oxidase (complex IV, CIV), that cooperate to transfer electrons derived from NADH and succinate to molecular oxygen, creating an electrochemical gradient over the inner membrane that drives transmembrane transport and the ATP synthase. Cytochrome c oxidase is the component of the respiratory chain that catalyzes the reduction of oxygen to water. Electrons originating from reduced cytochrome c in the intermembrane space (IMS) are transferred via the dinuclear copper A center (CU(A)) of subunit 2 and heme A of subunit 1 to the active site in subunit 1, a binuclear center (BNC) formed by heme A3 and copper B (CU(B)). The BNC reduces molecular oxygen to 2 water molecules using 4 electrons from cytochrome c in the IMS and 4 protons from the mitochondrial matrix. The protein is Cytochrome c oxidase subunit 3 (MT-CO3) of Osphranter robustus (Wallaroo).